Reading from the N-terminus, the 267-residue chain is Tryptophan synthase alpha chain (267 aa).

Residues Glu49 and Asp60 each act as proton acceptor in the active site.

The protein belongs to the TrpA family. Tetramer of two alpha and two beta chains.

It catalyses the reaction (1S,2R)-1-C-(indol-3-yl)glycerol 3-phosphate + L-serine = D-glyceraldehyde 3-phosphate + L-tryptophan + H2O. Its pathway is amino-acid biosynthesis; L-tryptophan biosynthesis; L-tryptophan from chorismate: step 5/5. Functionally, the alpha subunit is responsible for the aldol cleavage of indoleglycerol phosphate to indole and glyceraldehyde 3-phosphate. The sequence is that of Tryptophan synthase alpha chain from Rippkaea orientalis (strain PCC 8801 / RF-1) (Cyanothece sp. (strain PCC 8801)).